The following is a 129-amino-acid chain: Large-conductance mechanosensitive channel (129 aa).

3 consecutive transmembrane segments (helical) span residues 14 to 34 (IIDL…VTSL), 38 to 58 (IIMP…SFVY), and 67 to 87 (LGVF…IFMA).

The protein belongs to the MscL family. Homopentamer.

It localises to the cell membrane. Channel that opens in response to stretch forces in the membrane lipid bilayer. May participate in the regulation of osmotic pressure changes within the cell. This is Large-conductance mechanosensitive channel from Lysinibacillus sphaericus (strain C3-41).